The chain runs to 194 residues: MYQNHKSEILLATPLIKDDIVFTKSVVYLCQNDRHGAMGLIINKPLADTLKDVFEELHISHTNTFKEILEYPLYMGGPISPHKIMILHTTNGRNYTSTIKLDEGLAITASIDILEDIANNILPEYFLPVVGYSCWTANQLTDEIKSNDWIVTNKLNKKILFNHENKVKWQNHLEHAGYTLQSLDTLFNRNTGNC.

Belongs to the UPF0301 (AlgH) family.

The protein is UPF0301 protein FTA_1286 of Francisella tularensis subsp. holarctica (strain FTNF002-00 / FTA).